A 170-amino-acid chain; its full sequence is 3-hydroxydecanoyl-[acyl-carrier-protein] dehydratase (170 aa).

His-69 is an active-site residue.

This sequence belongs to the thioester dehydratase family. FabA subfamily. As to quaternary structure, homodimer.

The protein resides in the cytoplasm. The enzyme catalyses a (3R)-hydroxyacyl-[ACP] = a (2E)-enoyl-[ACP] + H2O. The catalysed reaction is (3R)-hydroxydecanoyl-[ACP] = (2E)-decenoyl-[ACP] + H2O. It catalyses the reaction (2E)-decenoyl-[ACP] = (3Z)-decenoyl-[ACP]. It functions in the pathway lipid metabolism; fatty acid biosynthesis. Necessary for the introduction of cis unsaturation into fatty acids. Catalyzes the dehydration of (3R)-3-hydroxydecanoyl-ACP to E-(2)-decenoyl-ACP and then its isomerization to Z-(3)-decenoyl-ACP. Can catalyze the dehydratase reaction for beta-hydroxyacyl-ACPs with saturated chain lengths up to 16:0, being most active on intermediate chain length. This is 3-hydroxydecanoyl-[acyl-carrier-protein] dehydratase from Caulobacter vibrioides (strain ATCC 19089 / CIP 103742 / CB 15) (Caulobacter crescentus).